Consider the following 591-residue polypeptide: A-type ATP synthase subunit A (591 aa).

Position 233 to 240 (233 to 240) interacts with ATP; the sequence is GPFGSGKT.

It belongs to the ATPase alpha/beta chains family. Has multiple subunits with at least A(3), B(3), C, D, E, F, H, I and proteolipid K(x).

The protein localises to the cell membrane. The enzyme catalyses ATP + H2O + 4 H(+)(in) = ADP + phosphate + 5 H(+)(out). Component of the A-type ATP synthase that produces ATP from ADP in the presence of a proton gradient across the membrane. The A chain is the catalytic subunit. This Metallosphaera sedula (strain ATCC 51363 / DSM 5348 / JCM 9185 / NBRC 15509 / TH2) protein is A-type ATP synthase subunit A.